The following is a 231-amino-acid chain: 7-cyano-7-deazaguanine synthase (231 aa).

ATP is bound at residue 8–18; it reads FSGGQDSTTCL. Zn(2+) contacts are provided by Cys188, Cys197, Cys200, and Cys203.

This sequence belongs to the QueC family. The cofactor is Zn(2+).

It carries out the reaction 7-carboxy-7-deazaguanine + NH4(+) + ATP = 7-cyano-7-deazaguanine + ADP + phosphate + H2O + H(+). It participates in purine metabolism; 7-cyano-7-deazaguanine biosynthesis. Functionally, catalyzes the ATP-dependent conversion of 7-carboxy-7-deazaguanine (CDG) to 7-cyano-7-deazaguanine (preQ(0)). The sequence is that of 7-cyano-7-deazaguanine synthase from Escherichia coli O157:H7.